Here is a 517-residue protein sequence, read N- to C-terminus: ATP synthase subunit alpha 1 (517 aa).

Residue 174–181 coordinates ATP; it reads GDRQTGKT.

The protein belongs to the ATPase alpha/beta chains family. As to quaternary structure, F-type ATPases have 2 components, CF(1) - the catalytic core - and CF(0) - the membrane proton channel. CF(1) has five subunits: alpha(3), beta(3), gamma(1), delta(1), epsilon(1). CF(0) has three main subunits: a(1), b(2) and c(9-12). The alpha and beta chains form an alternating ring which encloses part of the gamma chain. CF(1) is attached to CF(0) by a central stalk formed by the gamma and epsilon chains, while a peripheral stalk is formed by the delta and b chains.

The protein resides in the cell inner membrane. It catalyses the reaction ATP + H2O + 4 H(+)(in) = ADP + phosphate + 5 H(+)(out). Produces ATP from ADP in the presence of a proton gradient across the membrane. The alpha chain is a regulatory subunit. The sequence is that of ATP synthase subunit alpha 1 from Albidiferax ferrireducens (strain ATCC BAA-621 / DSM 15236 / T118) (Rhodoferax ferrireducens).